Reading from the N-terminus, the 469-residue chain is MNPNQKIITIGSICMVVGIISLILQIGNIISIWISHSIQTGSQNHTGTCNQSIITYKNSTWVNQTYVNISNTNVVAGKDTTSVILAGNSSLCPIRGWAIYSKDNGVRIGSKGDVFVIREPFISCSHLECRTFFLTQGALLNDKHSNGTVKDRSPYRALMSCPVGEAPSPYNSRFESVAWSASACHDGMGWLTIGISGPDDGAVAVLKYNGIITETIKSWRKEILRTQESECACVNGSCFTIMTDGPSGGPASYKIFKIEKGKVTKSIELDAPNSHYEECSCYPDTGKVMCVCRDNWHGSNRPWVSFDQNLDYQMGYICSGVFGDNPRPKDGKGNCGPVYVDGANGVKGFSYRYGNGVWIGRTKSNSSRQGFEMIWDPNGWTETDSNFFVKQDVVAVTDWSGYSGSFVQHPELTGLDCMRPCFWVELIRGRPKEKTIWTSGSSISFCGVNSDTVDWSWPDGAELPFTIDK.

Residues 1-6 (MNPNQK) are Intravirion-facing. The helical transmembrane segment at 7 to 27 (IITIGSICMVVGIISLILQIG) threads the bilayer. Positions 11 to 33 (GSICMVVGIISLILQIGNIISIW) are involved in apical transport and lipid raft association. The Virion surface portion of the chain corresponds to 28-469 (NIISIWISHS…GAELPFTIDK (442 aa)). The interval 36–90 (HSIQTGSQNHTGTCNQSIITYKNSTWVNQTYVNISNTNVVAGKDTTSVILAGNSS) is hypervariable stalk region. Residues N44, N50, N58, N63, N68, and N88 are each glycosylated (N-linked (GlcNAc...) asparagine; by host). Positions 91–469 (LCPIRGWAIY…GAELPFTIDK (379 aa)) are head of neuraminidase. Disulfide bonds link C92–C417, C124–C129, C184–C231, C233–C238, C279–C292, C281–C290, C318–C335, and C421–C446. A substrate-binding site is contributed by R118. A glycan (N-linked (GlcNAc...) asparagine; by host) is linked at N146. D151 serves as the catalytic Proton donor/acceptor. R152 contacts substrate. N235 carries an N-linked (GlcNAc...) asparagine; by host glycan. 277–278 (EE) provides a ligand contact to substrate. Residue R293 participates in substrate binding. Positions 294, 298, 324, and 344 each coordinate Ca(2+). The N-linked (GlcNAc...) asparagine; by host glycan is linked to N365. R368 contributes to the substrate binding site. The active-site Nucleophile is Y402.

Belongs to the glycosyl hydrolase 34 family. In terms of assembly, homotetramer. Ca(2+) serves as cofactor. In terms of processing, N-glycosylated.

Its subcellular location is the virion membrane. It localises to the host apical cell membrane. It carries out the reaction Hydrolysis of alpha-(2-&gt;3)-, alpha-(2-&gt;6)-, alpha-(2-&gt;8)- glycosidic linkages of terminal sialic acid residues in oligosaccharides, glycoproteins, glycolipids, colominic acid and synthetic substrates.. Its activity is regulated as follows. Inhibited by the neuraminidase inhibitors zanamivir (Relenza) and oseltamivir (Tamiflu). These drugs interfere with the release of progeny virus from infected cells and are effective against all influenza strains. Resistance to neuraminidase inhibitors is quite rare. Catalyzes the removal of terminal sialic acid residues from viral and cellular glycoconjugates. Cleaves off the terminal sialic acids on the glycosylated HA during virus budding to facilitate virus release. Additionally helps virus spread through the circulation by further removing sialic acids from the cell surface. These cleavages prevent self-aggregation and ensure the efficient spread of the progeny virus from cell to cell. Otherwise, infection would be limited to one round of replication. Described as a receptor-destroying enzyme because it cleaves a terminal sialic acid from the cellular receptors. May facilitate viral invasion of the upper airways by cleaving the sialic acid moieties on the mucin of the airway epithelial cells. Likely to plays a role in the budding process through its association with lipid rafts during intracellular transport. May additionally display a raft-association independent effect on budding. Plays a role in the determination of host range restriction on replication and virulence. Sialidase activity in late endosome/lysosome traffic seems to enhance virus replication. The protein is Neuraminidase of Aves (Human).